A 312-amino-acid chain; its full sequence is tRNA-cytidine(32) 2-sulfurtransferase (312 aa).

The PP-loop motif motif lies at 47–52 (SGGKDS). Residues C122, C125, and C213 each contribute to the [4Fe-4S] cluster site.

This sequence belongs to the TtcA family. As to quaternary structure, homodimer. It depends on Mg(2+) as a cofactor. The cofactor is [4Fe-4S] cluster.

It is found in the cytoplasm. It carries out the reaction cytidine(32) in tRNA + S-sulfanyl-L-cysteinyl-[cysteine desulfurase] + AH2 + ATP = 2-thiocytidine(32) in tRNA + L-cysteinyl-[cysteine desulfurase] + A + AMP + diphosphate + H(+). The protein operates within tRNA modification. Functionally, catalyzes the ATP-dependent 2-thiolation of cytidine in position 32 of tRNA, to form 2-thiocytidine (s(2)C32). The sulfur atoms are provided by the cysteine/cysteine desulfurase (IscS) system. This is tRNA-cytidine(32) 2-sulfurtransferase from Actinobacillus succinogenes (strain ATCC 55618 / DSM 22257 / CCUG 43843 / 130Z).